Reading from the N-terminus, the 164-residue chain is MAKTSNKVKRNANKANIFKLLADNRYAKFQYEISETIEAGIELLGTEVKSIRNGKANLRDGYCSFRDNEILLLNVHISPHKNVGSFFNHDPLRNRKLLLHKKEIIKMKSSTEKKGMTIVPLNLYLKGSWIKLTIGVGKGKKLHDKRQDEKQKSIKREINSALKR.

Positions 141–164 are disordered; it reads KLHDKRQDEKQKSIKREINSALKR. Positions 145-158 are enriched in basic and acidic residues; the sequence is KRQDEKQKSIKREI.

This sequence belongs to the SmpB family.

It is found in the cytoplasm. In terms of biological role, required for rescue of stalled ribosomes mediated by trans-translation. Binds to transfer-messenger RNA (tmRNA), required for stable association of tmRNA with ribosomes. tmRNA and SmpB together mimic tRNA shape, replacing the anticodon stem-loop with SmpB. tmRNA is encoded by the ssrA gene; the 2 termini fold to resemble tRNA(Ala) and it encodes a 'tag peptide', a short internal open reading frame. During trans-translation Ala-aminoacylated tmRNA acts like a tRNA, entering the A-site of stalled ribosomes, displacing the stalled mRNA. The ribosome then switches to translate the ORF on the tmRNA; the nascent peptide is terminated with the 'tag peptide' encoded by the tmRNA and targeted for degradation. The ribosome is freed to recommence translation, which seems to be the essential function of trans-translation. The polypeptide is SsrA-binding protein (Prochlorococcus marinus (strain MIT 9215)).